A 101-amino-acid chain; its full sequence is Stefin-C (101 aa).

Met1 bears the N-acetylmethionine mark. A Secondary area of contact motif is present at residues 49-53 (QVVAG).

It belongs to the cystatin family.

It is found in the cytoplasm. Its function is as follows. Strong inhibitor of papain and cathepsin L but poor inhibitor of cathepsin B. The chain is Stefin-C from Bos taurus (Bovine).